The chain runs to 551 residues: Pyrroline-5-carboxylate reductase 1 (551 aa).

The disordered stretch occupies residues 279–551 (LYTQKQQNKK…RHEVKTEQIN (273 aa)). Low complexity-rich tracts occupy residues 282-298 (QKQQ…QQHQ), 306-342 (QQHQ…YGHQ), 383-415 (QQYQ…SNQR), 424-441 (KSPQ…QPSS), 448-475 (QQQQ…QQQP), 487-496 (QQQQPQQQQQ), and 503-520 (YNNN…NNYN). Positions 537–551 (YHDEKRHEVKTEQIN) are enriched in basic and acidic residues.

The protein belongs to the pyrroline-5-carboxylate reductase family. In terms of assembly, homodecamer; composed of 5 homodimers.

The enzyme catalyses L-proline + NADP(+) = (S)-1-pyrroline-5-carboxylate + NADPH + 2 H(+). The catalysed reaction is L-proline + NAD(+) = (S)-1-pyrroline-5-carboxylate + NADH + 2 H(+). It participates in amino-acid biosynthesis; L-proline biosynthesis; L-proline from L-glutamate 5-semialdehyde: step 1/1. The protein is Pyrroline-5-carboxylate reductase 1 (pycr1) of Dictyostelium discoideum (Social amoeba).